A 213-amino-acid polypeptide reads, in one-letter code: 3-hexulose-6-phosphate synthase 2 (213 aa).

This sequence belongs to the HPS/KGPDC family. HPS subfamily.

It carries out the reaction D-ribulose 5-phosphate + formaldehyde = D-arabino-hex-3-ulose 6-phosphate. Its pathway is one-carbon metabolism; formaldehyde assimilation via RuMP pathway; D-fructose 6-phosphate from D-ribulose 5-phosphate and formaldehyde: step 1/2. Catalyzes the condensation of ribulose 5-phosphate with formaldehyde to form 3-hexulose 6-phosphate. The protein is 3-hexulose-6-phosphate synthase 2 of Staphylococcus saprophyticus subsp. saprophyticus (strain ATCC 15305 / DSM 20229 / NCIMB 8711 / NCTC 7292 / S-41).